The chain runs to 93 residues: MNAIWIVKGIENVVKSNPKRLEELLANLRRDKELFEEIVISAYVEGLISLSKASELLEITRDEMAEILRKRGVPLRNLNKDDLVAEVEAIKWF.

The protein belongs to the UPF0175 family.

The polypeptide is UPF0175 protein AF_0100 (Archaeoglobus fulgidus (strain ATCC 49558 / DSM 4304 / JCM 9628 / NBRC 100126 / VC-16)).